A 96-amino-acid chain; its full sequence is Co-chaperonin GroES (96 aa).

The protein belongs to the GroES chaperonin family. In terms of assembly, heptamer of 7 subunits arranged in a ring. Interacts with the chaperonin GroEL.

It is found in the cytoplasm. Together with the chaperonin GroEL, plays an essential role in assisting protein folding. The GroEL-GroES system forms a nano-cage that allows encapsulation of the non-native substrate proteins and provides a physical environment optimized to promote and accelerate protein folding. GroES binds to the apical surface of the GroEL ring, thereby capping the opening of the GroEL channel. The sequence is that of Co-chaperonin GroES from Alteromonas mediterranea (strain DSM 17117 / CIP 110805 / LMG 28347 / Deep ecotype).